Consider the following 104-residue polypeptide: U20-lycotoxin-Ls1c (104 aa).

The first 30 residues, 1 to 30 (MFSTSDQVSKMNSRILSALLILGIATCVIA), serve as a signal peptide directing secretion. The 46-residue stretch at 31–76 (GGFCPKSRHPQCDLSYKINDCCAQSDCRVGSVCCVEGCGNVCRAES) folds into the WAP domain. Cystine bridges form between Cys-34–Cys-64, Cys-42–Cys-68, Cys-51–Cys-63, Cys-52–Cys-90, and Cys-57–Cys-72.

It belongs to the venom protein 11 family. 02 (wap-2) subfamily. Post-translationally, contains 5 disulfide bonds. Expressed by the venom gland.

It localises to the secreted. In terms of biological role, has antibacterial activity. This is U20-lycotoxin-Ls1c from Lycosa singoriensis (Wolf spider).